A 1450-amino-acid polypeptide reads, in one-letter code: DNA-directed RNA polymerase RPB1 homolog (1450 aa).

Belongs to the RNA polymerase beta' chain family. In terms of assembly, part of the viral DNA-directed RNA polymerase that consists of 8 polII-like subunits (RPB1, RPB2, RPB3, RPB5, RPB6, RPB7, RPB9, RPB10), a capping enzyme and a termination factor.

The protein localises to the virion. It catalyses the reaction RNA(n) + a ribonucleoside 5'-triphosphate = RNA(n+1) + diphosphate. In terms of biological role, catalytic component of the DNA-directed RNA polymerase (RNAP) that catalyzes the transcription in the cytoplasm of viral DNA into RNA using the four ribonucleoside triphosphates as substrates. Forms the polymerase active center together with RPB2. Part of the core element with the central large cleft, the clamp element that moves to open and close the cleft and the jaws that are thought to grab the incoming DNA template. The polypeptide is DNA-directed RNA polymerase RPB1 homolog (African swine fever virus (isolate Tick/South Africa/Pretoriuskop Pr4/1996) (ASFV)).